The chain runs to 157 residues: Endoribonuclease YbeY (157 aa).

3 residues coordinate Zn(2+): His114, His118, and His124.

This sequence belongs to the endoribonuclease YbeY family. Zn(2+) is required as a cofactor.

It is found in the cytoplasm. In terms of biological role, single strand-specific metallo-endoribonuclease involved in late-stage 70S ribosome quality control and in maturation of the 3' terminus of the 16S rRNA. This Salmonella agona (strain SL483) protein is Endoribonuclease YbeY.